The chain runs to 334 residues: Beta-glucanase (334 aa).

The N-terminal stretch at 1-27 (MKNRVISLLMASLLLVLSVIVAPFYKA) is a signal peptide. In terms of domain architecture, GH16 spans 28-248 (EAATVVNTPF…YVKYYPNGVP (221 aa)). Glu-136 (nucleophile) is an active-site residue. Glu-140 serves as the catalytic Proton donor. The tract at residues 246-265 (GVPQDNPTPTPTIAPSTPTN) is disordered. The Dockerin domain maps to 267-334 (NLPLKGDVNG…RYLIRAIPSL (68 aa)).

It belongs to the glycosyl hydrolase 16 family.

The catalysed reaction is Hydrolysis of (1-&gt;4)-beta-D-glucosidic linkages in beta-D-glucans containing (1-&gt;3)- and (1-&gt;4)-bonds.. This chain is Beta-glucanase (licB), found in Acetivibrio thermocellus (Hungateiclostridium thermocellum).